We begin with the raw amino-acid sequence, 460 residues long: CUGBP Elav-like family member 6 (460 aa).

The span at 1 to 10 (MAAAPGGSAP) shows a compositional bias: low complexity. A disordered region spans residues 1–37 (MAAAPGGSAPPAGPSPRLAFSTADSGGGMSGLNPGPA). RRM domains follow at residues 46–127 (IKLF…PAAS) and 134–214 (RKLF…LADT). The interval 316–336 (NGFGSLTPQSNGQPGSDTLYN) is disordered. The span at 319–336 (GSLTPQSNGQPGSDTLYN) shows a compositional bias: polar residues. An RRM 3 domain is found at 375–453 (CNLFIYHLPQ…KRLKVQLKRP (79 aa)).

This sequence belongs to the CELF/BRUNOL family.

It is found in the nucleus. It localises to the cytoplasm. Its function is as follows. RNA-binding protein implicated in the regulation of pre-mRNA alternative splicing. Mediates exon inclusion and/or exclusion in pre-mRNA that are subject to tissue-specific and developmentally regulated alternative splicing. Specifically activates exon 5 inclusion of TNNT2 in a muscle-specific splicing enhancer (MSE)-dependent manner. Promotes also exon exclusion of INSR pre-mRNA. In Mus musculus (Mouse), this protein is CUGBP Elav-like family member 6 (Celf6).